The sequence spans 208 residues: Protein-L-isoaspartate O-methyltransferase (208 aa).

S59 is a catalytic residue.

It belongs to the methyltransferase superfamily. L-isoaspartyl/D-aspartyl protein methyltransferase family.

Its subcellular location is the cytoplasm. The enzyme catalyses [protein]-L-isoaspartate + S-adenosyl-L-methionine = [protein]-L-isoaspartate alpha-methyl ester + S-adenosyl-L-homocysteine. Catalyzes the methyl esterification of L-isoaspartyl residues in peptides and proteins that result from spontaneous decomposition of normal L-aspartyl and L-asparaginyl residues. It plays a role in the repair and/or degradation of damaged proteins. The chain is Protein-L-isoaspartate O-methyltransferase from Aliivibrio salmonicida (strain LFI1238) (Vibrio salmonicida (strain LFI1238)).